The chain runs to 1028 residues: Carbamoyl phosphate synthase large chain (1028 aa).

Residues 1–409 (MPPRRDLKKI…ALMKALRGLE (409 aa)) are carboxyphosphate synthetic domain. 12 residues coordinate ATP: Arg129, Arg169, Gly175, Gly176, Glu208, Val210, Glu215, Gly241, Val242, His243, Gln285, and Glu299. Positions 133–328 (QEAMQRIGLE…IAKIAALLAV (196 aa)) constitute an ATP-grasp 1 domain. Mg(2+)-binding residues include Gln285, Glu299, and Asn301. 3 residues coordinate Mn(2+): Gln285, Glu299, and Asn301. The interval 410–549 (RDVRALAGVR…YSTYELEDEV (140 aa)) is oligomerization domain. Residues 550 to 933 (WPSQKPKVVI…AYYKAELGAG (384 aa)) form a carbamoyl phosphate synthetic domain region. Residues 674–866 (HALCQRLGIP…LAKLAALIAV (193 aa)) enclose the ATP-grasp 2 domain. ATP-binding residues include Arg710, Arg750, Leu752, Glu757, Gly782, Val783, His784, Ser785, Gln825, and Glu837. Mg(2+) contacts are provided by Gln825, Glu837, and Asn839. Mn(2+) is bound by residues Gln825, Glu837, and Asn839. The MGS-like domain maps to 934 to 1028 (QRLPLSGRVR…QDWHQKAPRG (95 aa)). The tract at residues 934 to 1028 (QRLPLSGRVR…QDWHQKAPRG (95 aa)) is allosteric domain.

It belongs to the CarB family. As to quaternary structure, composed of two chains; the small (or glutamine) chain promotes the hydrolysis of glutamine to ammonia, which is used by the large (or ammonia) chain to synthesize carbamoyl phosphate. Tetramer of heterodimers (alpha,beta)4. It depends on Mg(2+) as a cofactor. Mn(2+) is required as a cofactor.

It carries out the reaction hydrogencarbonate + L-glutamine + 2 ATP + H2O = carbamoyl phosphate + L-glutamate + 2 ADP + phosphate + 2 H(+). The enzyme catalyses hydrogencarbonate + NH4(+) + 2 ATP = carbamoyl phosphate + 2 ADP + phosphate + 2 H(+). It participates in amino-acid biosynthesis; L-arginine biosynthesis; carbamoyl phosphate from bicarbonate: step 1/1. The protein operates within pyrimidine metabolism; UMP biosynthesis via de novo pathway; (S)-dihydroorotate from bicarbonate: step 1/3. Large subunit of the glutamine-dependent carbamoyl phosphate synthetase (CPSase). CPSase catalyzes the formation of carbamoyl phosphate from the ammonia moiety of glutamine, carbonate, and phosphate donated by ATP, constituting the first step of 2 biosynthetic pathways, one leading to arginine and/or urea and the other to pyrimidine nucleotides. The large subunit (synthetase) binds the substrates ammonia (free or transferred from glutamine from the small subunit), hydrogencarbonate and ATP and carries out an ATP-coupled ligase reaction, activating hydrogencarbonate by forming carboxy phosphate which reacts with ammonia to form carbamoyl phosphate. In Thermus thermophilus (strain ATCC 27634 / DSM 579 / HB8), this protein is Carbamoyl phosphate synthase large chain.